A 530-amino-acid polypeptide reads, in one-letter code: Retinoic acid-induced protein 2 (530 aa).

Polar residues predominate over residues 1-13; it reads MDDLQSQNLSMDM. Residues 1–22 form a disordered region; it reads MDDLQSQNLSMDMTDSPPALAN.

This Homo sapiens (Human) protein is Retinoic acid-induced protein 2 (RAI2).